The chain runs to 1016 residues: Protein kinase C-like 2 (1016 aa).

Residues 1 to 68 (MDMIDEAITE…LEKLKLRKNG (68 aa)) form the REM-1 1 domain. The interval 68 to 101 (GVRKSNSEKPSVGIEKNPSFSTTKSAKSFSSTSS) is disordered. The span at 86–101 (SFSTTKSAKSFSSTSS) shows a compositional bias: low complexity. The region spanning 111–188 (NYDTPLTISK…LKRYHDLHIE (78 aa)) is the REM-1 2 domain. The 113-residue stretch at 195–307 (PSTESRGNLN…VEKQRRKKVE (113 aa)) folds into the C2 domain. 2 Phorbol-ester/DAG-type zinc fingers span residues 405 to 453 (GHKF…VTKC) and 473 to 523 (PHHF…PDFC). The tract at residues 543–602 (YKAQQHKQKSSHHKHHHHKKSKSSSSKHKENDKASVSITTTTTPSITPADPVPTSPKPLA) is disordered. The segment covering 546–568 (QQHKQKSSHHKHHHHKKSKSSSS) has biased composition (basic residues). Residues 579-590 (SITTTTTPSITP) show a composition bias toward low complexity. In terms of domain architecture, Protein kinase spans 683–942 (FTFLSVLGKG…AEDVMTHPFF (260 aa)). Residues 689–697 (LGKGNFGKV) and K712 each bind ATP. The Proton acceptor role is filled by D808. Residues 943 to 1013 (SNINWDDIYH…SCEDDKPSTT (71 aa)) form the AGC-kinase C-terminal domain. At T984 the chain carries Phosphothreonine.

The protein belongs to the protein kinase superfamily. AGC Ser/Thr protein kinase family. PKC subfamily. In terms of assembly, interacts with rho2.

The enzyme catalyses L-seryl-[protein] + ATP = O-phospho-L-seryl-[protein] + ADP + H(+). It carries out the reaction L-threonyl-[protein] + ATP = O-phospho-L-threonyl-[protein] + ADP + H(+). Its function is as follows. Involved in the control of the cell shape. Target of the inhibitor staurosporine. The sequence is that of Protein kinase C-like 2 (pck2) from Schizosaccharomyces pombe (strain 972 / ATCC 24843) (Fission yeast).